Consider the following 501-residue polypeptide: U6 snRNA (guanine-N(2))-methyltransferase THUMPD2 (501 aa).

The 116-residue stretch at 149 to 264 (TEQIQELQET…DVYSVLGIPV (116 aa)) folds into the THUMP domain. The disordered stretch occupies residues 414-469 (LKGGEASSGPLNSQGGHTEEPGGEERLTPAEKAAVSEPVSSPFAASNQGRLDRMPP). Positions 430–442 (HTEEPGGEERLTP) are enriched in basic and acidic residues.

It belongs to the methyltransferase superfamily. In terms of assembly, part of the heterodimeric THUMPD2-TRM112 methyltransferase complex; this complex forms an active tRNA methyltransferase, where TRMT112 acts as an activator of the catalytic subunit THUMPD2.

It localises to the nucleus. It catalyses the reaction guanosine in U6 snRNA + S-adenosyl-L-methionine = N(2)-methylguanosine in U6 snRNA + S-adenosyl-L-homocysteine + H(+). Functionally, catalytic subunit of the THUMPD2-TRM112 methyltransferase complex, that specifically mediates the S-adenosyl-L-methionine-dependent N(2)-methylation of guanosine nucleotides, most probably at position 72 (m2G72), in the U6snRNA of the major spliceosome. This modification in the U6 snRNA affects the constitutive splicing efficiency of introns that have suboptimal splice sites and can impact final mRNA levels. The chain is U6 snRNA (guanine-N(2))-methyltransferase THUMPD2 from Bos taurus (Bovine).